The sequence spans 593 residues: Aspartate--tRNA ligase (593 aa).

Glu180 is a binding site for L-aspartate. The segment at 204-207 (QIFK) is aspartate. Arg226 contributes to the L-aspartate binding site. ATP-binding positions include 226–228 (RDE) and Gln235. Residue His453 participates in L-aspartate binding. Glu487 is an ATP binding site. Position 494 (Arg494) interacts with L-aspartate. 539–542 (GLDR) contacts ATP.

The protein belongs to the class-II aminoacyl-tRNA synthetase family. Type 1 subfamily. In terms of assembly, homodimer.

It localises to the cytoplasm. The catalysed reaction is tRNA(Asp) + L-aspartate + ATP = L-aspartyl-tRNA(Asp) + AMP + diphosphate. Functionally, catalyzes the attachment of L-aspartate to tRNA(Asp) in a two-step reaction: L-aspartate is first activated by ATP to form Asp-AMP and then transferred to the acceptor end of tRNA(Asp). In Clostridium botulinum (strain Okra / Type B1), this protein is Aspartate--tRNA ligase.